A 353-amino-acid polypeptide reads, in one-letter code: UPF0421 protein YgaE (353 aa).

A run of 4 helical transmembrane segments spans residues 20-40, 67-87, 103-123, and 125-145; these read LASWIGLPAPIFAGIAAIFAI, VFGLIFGPSPIMIGLTAVIVI, LVTVIAILESAGDDFLMFALI, and TSTVILGVLSSFIVNLVFLPP.

It belongs to the UPF0421 family.

The protein localises to the cell membrane. The protein is UPF0421 protein YgaE (ygaE) of Bacillus subtilis (strain 168).